The sequence spans 159 residues: UPF0262 protein TM1040_3562 (159 aa).

Residues 1 to 21 form a disordered region; that stretch reads MSRISQIELDDRNLPPPTPEI.

This sequence belongs to the UPF0262 family.

The polypeptide is UPF0262 protein TM1040_3562 (Ruegeria sp. (strain TM1040) (Silicibacter sp.)).